A 73-amino-acid chain; its full sequence is Small ribosomal subunit protein bS18 (73 aa).

Belongs to the bacterial ribosomal protein bS18 family. Part of the 30S ribosomal subunit. Forms a tight heterodimer with protein bS6.

Functionally, binds as a heterodimer with protein bS6 to the central domain of the 16S rRNA, where it helps stabilize the platform of the 30S subunit. This is Small ribosomal subunit protein bS18 from Prochlorococcus marinus (strain MIT 9313).